Here is a 596-residue protein sequence, read N- to C-terminus: Signal peptide peptidase-like 2B (596 aa).

A signal peptide spans 1–21; the sequence is MAARWAQFLLFSLLSLPQVYC. Topologically, residues 22–170 are lumenal; sequence EYGMVHVLSE…APNEPVLDYN (149 aa). The region spanning 53-147 is the PA domain; that stretch reads HDLGKASLLQ…LLSYSDMLDI (95 aa). Residue Asn-93 is glycosylated (N-linked (GlcNAc...) asparagine). The helical transmembrane segment at 171-191 threads the bilayer; sequence MVIIFVMAVGTVAIGGYWAGS. The Cytoplasmic portion of the chain corresponds to 192-219; that stretch reads RDVKERYMKHKRDDGAEKHEDETVDVTP. Residues 220–240 form a helical membrane-spanning segment; the sequence is IMICVFVVMCCSMLVLLYFFY. Residues 241 to 242 are Lumenal-facing; that stretch reads DH. A helical membrane pass occupies residues 243–263; the sequence is LVYVIIGIFCLAASIGLYSCL. The Cytoplasmic segment spans residues 264–289; it reads SPFVRRFPLGKCRIPDNNLPYFHKRP. Residues 290 to 310 traverse the membrane as a helical segment; it reads QVRILLLAVFCISVSVVWGVF. At 311-315 the chain is on the lumenal side; the sequence is RNEDQ. The chain crosses the membrane as a helical span at residues 316–336; the sequence is WAWVLQDALGIAFCLYMLKTI. The Cytoplasmic segment spans residues 337 to 344; the sequence is RLPTFKGC. The helical transmembrane segment at 345–365 threads the bilayer; the sequence is TLLLLVLFVYDVFFVFITPFL. Asp-355 is a catalytic residue. Residues 366-408 lie on the Lumenal side of the membrane; it reads TKTGESIMVEVAAGPSDSATHEKLPMVLKVPRLNSSPLALCDR. The chain crosses the membrane as a helical span at residues 409–429; that stretch reads PFSLLGFGDILVPGLLVAYCH. Asp-417 is an active-site residue. Residues 430–441 are Cytoplasmic-facing; it reads RFDIQVQSSRVY. A helical membrane pass occupies residues 442-462; sequence FVACTIAYGIGLLVTFVALAL. The Lumenal portion of the chain corresponds to 463-466; it reads MQMG. A helical membrane pass occupies residues 467 to 487; sequence QPALLYLVPCTLITSFSVALW. The short motif at 468–470 is the PAL element; the sequence is PAL. The Cytoplasmic segment spans residues 488-596; that stretch reads RKELAMFWTG…SLNLEQKQLE (109 aa). The interval 543 to 596 is disordered; sequence KELHSPTLAAEEPADNDTKTEQSEVSIAQSEEAAGHNKDDLESKSLNLEQKQLE. Over residues 575–585 the composition is skewed to basic and acidic residues; it reads AAGHNKDDLES. Residues 586 to 596 show a composition bias toward polar residues; sequence KSLNLEQKQLE.

It belongs to the peptidase A22B family.

It is found in the cell membrane. It localises to the golgi apparatus membrane. The protein localises to the lysosome membrane. The protein resides in the endosome membrane. Its subcellular location is the membrane. Intramembrane-cleaving aspartic protease (I-CLiP) that cleaves type II membrane signal peptides in the hydrophobic plane of the membrane. In Gallus gallus (Chicken), this protein is Signal peptide peptidase-like 2B.